The primary structure comprises 288 residues: Homoserine kinase (288 aa).

79–89 (PLARGLGSSSS) contacts ATP.

It belongs to the GHMP kinase family. Homoserine kinase subfamily.

It is found in the cytoplasm. It catalyses the reaction L-homoserine + ATP = O-phospho-L-homoserine + ADP + H(+). It participates in amino-acid biosynthesis; L-threonine biosynthesis; L-threonine from L-aspartate: step 4/5. In terms of biological role, catalyzes the ATP-dependent phosphorylation of L-homoserine to L-homoserine phosphate. The protein is Homoserine kinase of Streptococcus sanguinis (strain SK36).